A 155-amino-acid polypeptide reads, in one-letter code: Putative methyl-CpG-binding domain protein 12 (155 aa).

Residues 1 to 53 form a CW-type zinc finger; it reads MVQCTDCKKWRLIPSMQHYNIIKETQLQTPFVCGTTSGWTPNMSCNVPQDGTT. Positions 3-45 match the MBD-associated domain (MAD) motif; the sequence is QCTDCKKWRLIPSMQHYNIIKETQLQTPFVCGTTSGWTPNMSC. Residues C4, C7, C33, and C45 each contribute to the Zn(2+) site. Residues 53–126 enclose the MBD domain; that stretch reads TCDTWPSIPP…SQFSFQIPKP (74 aa). Residues 130–155 form a disordered region; the sequence is NYVKKRTRPVKRRKSSKDNNCEKGKK. Basic residues predominate over residues 133–144; sequence KKRTRPVKRRKS. The short motif at 140 to 147 is the Nuclear localization signal element; that stretch reads KRRKSSKD. Basic and acidic residues predominate over residues 145-155; the sequence is SKDNNCEKGKK.

Its subcellular location is the nucleus. Probable transcriptional regulator. This is Putative methyl-CpG-binding domain protein 12 (MBD12) from Arabidopsis thaliana (Mouse-ear cress).